The chain runs to 368 residues: 1-deoxy-D-xylulose 5-phosphate reductoisomerase (368 aa).

Residues threonine 10, glycine 11, serine 12, isoleucine 13, glutamine 38, and asparagine 100 each coordinate NADPH. Lysine 101 contributes to the 1-deoxy-D-xylulose 5-phosphate binding site. An NADPH-binding site is contributed by glutamate 102. Aspartate 125 is a binding site for Mn(2+). 1-deoxy-D-xylulose 5-phosphate-binding residues include serine 126, glutamate 127, serine 151, and histidine 172. Residue glutamate 127 coordinates Mn(2+). Glycine 178 contributes to the NADPH binding site. The 1-deoxy-D-xylulose 5-phosphate site is built by serine 185, asparagine 190, lysine 191, and glutamate 194. Position 194 (glutamate 194) interacts with Mn(2+).

Belongs to the DXR family. Mg(2+) serves as cofactor. Requires Mn(2+) as cofactor.

It catalyses the reaction 2-C-methyl-D-erythritol 4-phosphate + NADP(+) = 1-deoxy-D-xylulose 5-phosphate + NADPH + H(+). It participates in isoprenoid biosynthesis; isopentenyl diphosphate biosynthesis via DXP pathway; isopentenyl diphosphate from 1-deoxy-D-xylulose 5-phosphate: step 1/6. Functionally, catalyzes the NADPH-dependent rearrangement and reduction of 1-deoxy-D-xylulose-5-phosphate (DXP) to 2-C-methyl-D-erythritol 4-phosphate (MEP). The sequence is that of 1-deoxy-D-xylulose 5-phosphate reductoisomerase from Tropheryma whipplei (strain TW08/27) (Whipple's bacillus).